Here is a 130-residue protein sequence, read N- to C-terminus: Small ribosomal subunit protein uS8 (130 aa).

The protein belongs to the universal ribosomal protein uS8 family. As to quaternary structure, part of the 30S ribosomal subunit.

One of the primary rRNA binding proteins, it binds directly to 16S rRNA central domain where it helps coordinate assembly of the platform of the 30S subunit. This Pyrobaculum islandicum (strain DSM 4184 / JCM 9189 / GEO3) protein is Small ribosomal subunit protein uS8.